The sequence spans 449 residues: Tubulin alpha chain (449 aa).

8 residues coordinate GTP: Gln11, Glu71, Ser140, Gly144, Thr145, Thr179, Asn206, and Asn228. Glu71 serves as a coordination point for Mg(2+). Glu254 is an active-site residue.

This sequence belongs to the tubulin family. In terms of assembly, dimer of alpha and beta chains. A typical microtubule is a hollow water-filled tube with an outer diameter of 25 nm and an inner diameter of 15 nM. Alpha-beta heterodimers associate head-to-tail to form protofilaments running lengthwise along the microtubule wall with the beta-tubulin subunit facing the microtubule plus end conferring a structural polarity. Microtubules usually have 13 protofilaments but different protofilament numbers can be found in some organisms and specialized cells. Mg(2+) serves as cofactor.

The protein resides in the cytoplasm. The protein localises to the cytoskeleton. The catalysed reaction is GTP + H2O = GDP + phosphate + H(+). In terms of biological role, tubulin is the major constituent of microtubules, a cylinder consisting of laterally associated linear protofilaments composed of alpha- and beta-tubulin heterodimers. Microtubules grow by the addition of GTP-tubulin dimers to the microtubule end, where a stabilizing cap forms. Below the cap, tubulin dimers are in GDP-bound state, owing to GTPase activity of alpha-tubulin. The sequence is that of Tubulin alpha chain (TUBA) from Sordaria macrospora (strain ATCC MYA-333 / DSM 997 / K(L3346) / K-hell).